A 328-amino-acid polypeptide reads, in one-letter code: Mitochondrial GTPase 1 (328 aa).

A CP-type G domain is found at 23–211; the sequence is NKTLKRLKNL…MLDTPGIMTP (189 aa). Residues 70–73, 155–160, and Gly207 contribute to the GTP site; these read NKCD and NTGKSS.

The protein belongs to the TRAFAC class YlqF/YawG GTPase family. MTG1 subfamily.

Its subcellular location is the mitochondrion inner membrane. In terms of biological role, mitochondrial GTPase involved in assembly of the large ribosomal subunit. Plays a role in expression of the mitochondrial translational machinery. This chain is Mitochondrial GTPase 1 (mtg1), found in Schizosaccharomyces pombe (strain 972 / ATCC 24843) (Fission yeast).